The sequence spans 151 residues: Deoxyuridine 5'-triphosphate nucleotidohydrolase (151 aa).

Residues 70 to 72 (RSG), Asn83, 87 to 89 (LID), and Met97 each bind substrate.

Belongs to the dUTPase family. Mg(2+) is required as a cofactor.

The catalysed reaction is dUTP + H2O = dUMP + diphosphate + H(+). It participates in pyrimidine metabolism; dUMP biosynthesis; dUMP from dCTP (dUTP route): step 2/2. Functionally, this enzyme is involved in nucleotide metabolism: it produces dUMP, the immediate precursor of thymidine nucleotides and it decreases the intracellular concentration of dUTP so that uracil cannot be incorporated into DNA. The polypeptide is Deoxyuridine 5'-triphosphate nucleotidohydrolase (Actinobacillus pleuropneumoniae serotype 7 (strain AP76)).